We begin with the raw amino-acid sequence, 106 residues long: ATP-dependent Clp protease adapter protein ClpS (106 aa).

The span at M1–L13 shows a compositional bias: polar residues. A disordered region spans residues M1–K21.

Belongs to the ClpS family. Binds to the N-terminal domain of the chaperone ClpA.

Functionally, involved in the modulation of the specificity of the ClpAP-mediated ATP-dependent protein degradation. This chain is ATP-dependent Clp protease adapter protein ClpS, found in Pectobacterium carotovorum subsp. carotovorum (strain PC1).